The following is a 448-amino-acid chain: Cytoplasmic tRNA 2-thiolation protein 2 (448 aa).

It belongs to the CTU2/NCS2 family.

The protein resides in the cytoplasm. The protein operates within tRNA modification; 5-methoxycarbonylmethyl-2-thiouridine-tRNA biosynthesis. Its function is as follows. Plays a central role in 2-thiolation of mcm(5)S(2)U at tRNA wobble positions of tRNA(Lys), tRNA(Glu) and tRNA(Gln). May act by forming a heterodimer with NCS6 that ligates sulfur from thiocarboxylated URM1 onto the uridine of tRNAs at wobble position. Prior mcm(5) tRNA modification by the elongator complex is required for 2-thiolation. May also be involved in protein urmylation. This is Cytoplasmic tRNA 2-thiolation protein 2 from Debaryomyces hansenii (strain ATCC 36239 / CBS 767 / BCRC 21394 / JCM 1990 / NBRC 0083 / IGC 2968) (Yeast).